A 259-amino-acid polypeptide reads, in one-letter code: 1,2-dihydroxy-1,2-dihydronaphthalene dehydrogenase (259 aa).

8 to 32 is a binding site for NAD(+); that stretch reads SITGAGSGIGLELVRSFKSAGYYVS. S140 serves as a coordination point for substrate. Y153 functions as the Proton acceptor in the catalytic mechanism.

Belongs to the short-chain dehydrogenases/reductases (SDR) family.

The catalysed reaction is (1R,2S)-1,2-dihydronaphthalene-1,2-diol + NAD(+) = naphthalene-1,2-diol + NADH + H(+). It catalyses the reaction cis-1,2-dihydroxy-1,2-dihydrodibenzothiophene + NAD(+) = 1,2-dihydroxydibenzothiophene + NADH + H(+). It functions in the pathway aromatic compound metabolism; naphthalene degradation. Catalyzes the oxidation of naphthalene dihydrodiol into 1,2-dihydroxynaphthalene. The sequence is that of 1,2-dihydroxy-1,2-dihydronaphthalene dehydrogenase (nahB) from Pseudomonas putida (Arthrobacter siderocapsulatus).